The chain runs to 131 residues: Large ribosomal subunit protein eL32 (131 aa).

Belongs to the eukaryotic ribosomal protein eL32 family.

This chain is Large ribosomal subunit protein eL32 (RPL32), found in Candida glabrata (strain ATCC 2001 / BCRC 20586 / JCM 3761 / NBRC 0622 / NRRL Y-65 / CBS 138) (Yeast).